Consider the following 222-residue polypeptide: Putative thymidylate synthase (222 aa).

Cys146 is a catalytic residue.

The protein belongs to the thymidylate synthase family. Archaeal-type ThyA subfamily. As to quaternary structure, monomer.

The protein resides in the cytoplasm. It participates in pyrimidine metabolism; dTTP biosynthesis. Functionally, may catalyze the biosynthesis of dTMP using an unknown cosubstrate. This Methanothermobacter thermautotrophicus (strain ATCC 29096 / DSM 1053 / JCM 10044 / NBRC 100330 / Delta H) (Methanobacterium thermoautotrophicum) protein is Putative thymidylate synthase.